A 579-amino-acid polypeptide reads, in one-letter code: Polyadenylate-binding protein, cytoplasmic and nuclear (579 aa).

The span at 1-10 (MADITEKTAE) shows a compositional bias: basic and acidic residues. Residues 1–32 (MADITEKTAEQLENLSLQDKQEGTNEENQSET) are disordered. 4 RRM domains span residues 35 to 113 (ASLY…WSQR), 123 to 200 (GNIF…PHLS), 216 to 293 (TNVY…RAQK), and 319 to 396 (INLF…IAQR). Residues 487–566 (GFARNGPAAN…ASAAYESFKQ (80 aa)) form the PABC domain. The segment at 560-579 (AYESFKQEQQQPQGEEAQQA) is disordered. Positions 566 to 579 (QEQQQPQGEEAQQA) are enriched in low complexity.

It belongs to the polyadenylate-binding protein type-1 family.

The protein resides in the cytoplasm. It is found in the nucleus. In terms of biological role, binds the poly(A) tail of mRNA. Appears to be an important mediator of the multiple roles of the poly(A) tail in mRNA biogenesis, stability and translation. In the nucleus, involved in both mRNA cleavage and polyadenylation. Is also required for efficient mRNA export to the cytoplasm. Acts in concert with a poly(A)-specific nuclease (PAN) to affect poly(A) tail shortening, which may occur concomitantly with either nucleocytoplasmic mRNA transport or translational initiation. In the cytoplasm, stimulates translation initiation and regulates mRNA decay through translation termination-coupled poly(A) shortening, probably mediated by PAN. The sequence is that of Polyadenylate-binding protein, cytoplasmic and nuclear (PAB1) from Candida glabrata (strain ATCC 2001 / BCRC 20586 / JCM 3761 / NBRC 0622 / NRRL Y-65 / CBS 138) (Yeast).